We begin with the raw amino-acid sequence, 289 residues long: NAD(P)H-hydrate epimerase (289 aa).

The YjeF N-terminal domain occupies 71–277 (AQTIDNELMS…SIVEKYNLKV (207 aa)). 122–126 (NNGGD) lines the (6S)-NADPHX pocket. K(+)-binding residues include N123 and D185. (6S)-NADPHX-binding positions include 189 to 195 (GFSFTGE) and D218. Residue S221 coordinates K(+).

This sequence belongs to the NnrE/AIBP family. It depends on K(+) as a cofactor.

It catalyses the reaction (6R)-NADHX = (6S)-NADHX. It carries out the reaction (6R)-NADPHX = (6S)-NADPHX. Its function is as follows. Catalyzes the epimerization of the S- and R-forms of NAD(P)HX, a damaged form of NAD(P)H that is a result of enzymatic or heat-dependent hydration. This is a prerequisite for the S-specific NAD(P)H-hydrate dehydratase to allow the repair of both epimers of NAD(P)HX. The protein is NAD(P)H-hydrate epimerase of Plasmodium vivax (strain Salvador I).